Here is a 375-residue protein sequence, read N- to C-terminus: Ferredoxin--NADP reductase, root-type isozyme, chloroplastic (375 aa).

The N-terminal 60 residues, methionine 1 to methionine 60, are a transit peptide targeting the chloroplast. Residues lysine 91–leucine 219 form the FAD-binding FR-type domain. Residues arginine 151–leucine 154, cysteine 172–arginine 174, tyrosine 178, valine 193–serine 195, and threonine 235 contribute to the FAD site. Position 174 (arginine 174) interacts with NADP(+). NADP(+)-binding positions include threonine 235, valine 266 to alanine 267, serine 296 to arginine 297, lysine 306, glycine 334 to leucine 335, and glutamate 373.

This sequence belongs to the ferredoxin--NADP reductase type 1 family. The cofactor is FAD.

It localises to the plastid. Its subcellular location is the chloroplast. The enzyme catalyses 2 reduced [2Fe-2S]-[ferredoxin] + NADP(+) + H(+) = 2 oxidized [2Fe-2S]-[ferredoxin] + NADPH. The protein operates within energy metabolism; photosynthesis. In terms of biological role, may play a key role in regulating the relative amounts of cyclic and non-cyclic electron flow to meet the demands of the plant for ATP and reducing power. Is involved in nitrate assimilation. In Nicotiana tabacum (Common tobacco), this protein is Ferredoxin--NADP reductase, root-type isozyme, chloroplastic.